We begin with the raw amino-acid sequence, 170 residues long: uncharacterized protein (170 aa).

Residues 25–151 (PALSPHLVVD…FGHHWSLGQP (127 aa)) form the VOC domain.

This is an uncharacterized protein from Mycobacterium tuberculosis (strain CDC 1551 / Oshkosh).